Consider the following 265-residue polypeptide: 2-Cys peroxiredoxin BAS1, chloroplastic (265 aa).

The transit peptide at 1 to 65 (MACVASSTTL…SSTSRRSFAV (65 aa)) directs the protein to the chloroplast. In terms of domain architecture, Thioredoxin spans 73 to 232 (PLVGNKAPDF…TMRTLQALQY (160 aa)). Cys119 functions as the Cysteine sulfenic acid (-SOH) intermediate in the catalytic mechanism.

It belongs to the peroxiredoxin family. AhpC/Prx1 subfamily. In terms of assembly, homodimer; disulfide-linked, upon oxidation.

It is found in the plastid. Its subcellular location is the chloroplast. The enzyme catalyses a hydroperoxide + [thioredoxin]-dithiol = an alcohol + [thioredoxin]-disulfide + H2O. In terms of biological role, thiol-specific peroxidase that catalyzes the reduction of hydrogen peroxide and organic hydroperoxides to water and alcohols, respectively. Plays a role in cell protection against oxidative stress by detoxifying peroxides. May be an antioxidant enzyme particularly in the developing shoot and photosynthesizing leaf. The sequence is that of 2-Cys peroxiredoxin BAS1, chloroplastic (BAS1) from Spinacia oleracea (Spinach).